A 247-amino-acid chain; its full sequence is ATP synthase subunit a, chloroplastic (247 aa).

A run of 5 helical transmembrane segments spans residues 38 to 58 (QVLI…ALAV), 95 to 115 (VPFI…GALL), 134 to 154 (INTT…AGLA), 199 to 219 (LVVV…VMFL), and 220 to 240 (GLFT…AYIG).

This sequence belongs to the ATPase A chain family. In terms of assembly, F-type ATPases have 2 components, CF(1) - the catalytic core - and CF(0) - the membrane proton channel. CF(1) has five subunits: alpha(3), beta(3), gamma(1), delta(1), epsilon(1). CF(0) has four main subunits: a, b, b' and c.

It is found in the plastid. The protein resides in the chloroplast thylakoid membrane. Key component of the proton channel; it plays a direct role in the translocation of protons across the membrane. The polypeptide is ATP synthase subunit a, chloroplastic (Trachelium caeruleum (Blue throatwort)).